The following is an 827-amino-acid chain: Villin-1 (827 aa).

The segment at 1–126 is necessary for homodimerization; it reads MTKLSAQVKG…IRKGGVASGM (126 aa). Residues 1-734 are core; sequence MTKLSAQVKG…YEDLKAELGN (734 aa). One copy of the Gelsolin-like 1 repeat lies at 27 to 76; it reads MQMVPVPSNSFGSFFDGDCYVIQAIHKTGSNLSYDIHYWIGQASSQDEQG. LPA/PIP2-binding site regions lie at residues 112 to 119 and 138 to 146; these read KKGIVIRK and RLLHVKGKR. Gelsolin-like repeat units lie at residues 148-188 and 265-309; these read VVAG…MERL and VVVR…QEKK. A Phosphoserine modification is found at Ser-366. 3 Gelsolin-like repeats span residues 407–457, 528–568, and 631–672; these read NLEL…DEIT, TKAF…DERE, and FLAT…DEKK. The residue at position 735 (Ser-735) is a Phosphoserine. Residues 735–827 form a headpiece region; sequence SGDWSQITAE…QNLKKEKGLF (93 aa). The 67-residue stretch at 761-827 folds into the HP domain; the sequence is SGPLPIFPLE…QNLKKEKGLF (67 aa). Positions 816-824 are LPA/PIP2-binding site 3; that stretch reads KQQNLKKEK.

The protein belongs to the villin/gelsolin family. Monomer. Homodimer; homodimerization is necessary for actin-bundling. Associates with F-actin; phosphorylation at tyrosine residues decreases the association with F-actin. Interacts (phosphorylated at C-terminus tyrosine phosphorylation sites) with PLCG1 (via the SH2 domains). Interacts (phosphorylated form) with PLCG1; the interaction is enhanced by hepatocyte growth factor (HGF). In terms of processing, phosphorylated on tyrosine residues by SRC. The unphosphorylated form increases the initial rate of actin-nucleating activity, whereas the tyrosine-phosphorylated form inhibits actin-nucleating activity, enhances actin-bundling activity and enhances actin-severing activity by reducing high Ca(2+) requirements. The tyrosine-phosphorylated form does not regulate actin-capping activity. Tyrosine phosphorylation is essential for cell migration: tyrosine phosphorylation sites in the N-terminus half regulate actin reorganization and cell morphology, whereas tyrosine phosphorylation sites in the C-terminus half regulate cell migration via interaction with PLCG1. Tyrosine phosphorylation is induced by epidermal growth factor (EGF) and stimulates cell migration.

Its subcellular location is the cytoplasm. The protein localises to the cytoskeleton. It localises to the cell projection. The protein resides in the lamellipodium. It is found in the ruffle. Its subcellular location is the microvillus. The protein localises to the filopodium tip. It localises to the filopodium. Epithelial cell-specific Ca(2+)-regulated actin-modifying protein that modulates the reorganization of microvillar actin filaments. Plays a role in the actin nucleation, actin filament bundle assembly, actin filament capping and severing. Binds phosphatidylinositol 4,5-bisphosphate (PIP2) and lysophosphatidic acid (LPA); binds LPA with higher affinity than PIP2. Binding to LPA increases its phosphorylation by SRC and inhibits all actin-modifying activities. Binding to PIP2 inhibits actin-capping and -severing activities but enhances actin-bundling activity. Regulates the intestinal epithelial cell morphology, cell invasion, cell migration and apoptosis. Protects against apoptosis induced by dextran sodium sulfate (DSS) in the gastrointestinal epithelium. Appears to regulate cell death by maintaining mitochondrial integrity. Enhances hepatocyte growth factor (HGF)-induced epithelial cell motility, chemotaxis and wound repair. This is Villin-1 (VIL1) from Bos taurus (Bovine).